Reading from the N-terminus, the 146-residue chain is uncharacterized protein (146 aa).

Residues 87–121 are disordered; it reads SRSHHSTAKSAKSALSSDSGDGSDPDPEPETFPSA. Over residues 94–106 the composition is skewed to low complexity; it reads AKSAKSALSSDSG.

This is an uncharacterized protein from Escherichia coli (strain K12).